A 728-amino-acid chain; its full sequence is Ankyrin repeat protein A (728 aa).

ANK repeat units lie at residues 381–410 (INLPGLYLAINYGNADIVETIFNSLSETGY), 429–458 (NGFSGLFLAISRKDKNVVTSILNALPKLAA), 477–506 (TSSHVLYHVMANGDADMLKIVLNALPLLIR), 525–554 (YGCPGLYLAMQNGHSDIVKVILEALPSLAQ), and 573–602 (ARDTGLFMAMQRGHMNVINTIFNALPTLFN).

This sequence belongs to the Toxin_15 family.

The protein is Ankyrin repeat protein A (arpA) of Escherichia coli (strain K12).